A 206-amino-acid chain; its full sequence is Non-structural protein 7b (206 aa).

The first 17 residues, 1-17, serve as a signal peptide directing secretion; the sequence is MIVVILVCIFLANGIKA.

This is Non-structural protein 7b from Feline coronavirus (strain FIPV WSU-79/1146) (FCoV).